A 709-amino-acid polypeptide reads, in one-letter code: Ribosomal RNA large subunit methyltransferase K/L (709 aa).

One can recognise a THUMP domain in the interval 43–154 (LAYRITLWTR…NGVITIAMNF (112 aa)).

It belongs to the methyltransferase superfamily. RlmKL family.

It localises to the cytoplasm. It carries out the reaction guanosine(2445) in 23S rRNA + S-adenosyl-L-methionine = N(2)-methylguanosine(2445) in 23S rRNA + S-adenosyl-L-homocysteine + H(+). It catalyses the reaction guanosine(2069) in 23S rRNA + S-adenosyl-L-methionine = N(2)-methylguanosine(2069) in 23S rRNA + S-adenosyl-L-homocysteine + H(+). In terms of biological role, specifically methylates the guanine in position 2445 (m2G2445) and the guanine in position 2069 (m7G2069) of 23S rRNA. This Shewanella baltica (strain OS155 / ATCC BAA-1091) protein is Ribosomal RNA large subunit methyltransferase K/L.